We begin with the raw amino-acid sequence, 284 residues long: ATP synthase gamma chain (284 aa).

Belongs to the ATPase gamma chain family. As to quaternary structure, F-type ATPases have 2 components, CF(1) - the catalytic core - and CF(0) - the membrane proton channel. CF(1) has five subunits: alpha(3), beta(3), gamma(1), delta(1), epsilon(1). CF(0) has three main subunits: a, b and c.

It is found in the cell membrane. Produces ATP from ADP in the presence of a proton gradient across the membrane. The gamma chain is believed to be important in regulating ATPase activity and the flow of protons through the CF(0) complex. The sequence is that of ATP synthase gamma chain from Pelotomaculum thermopropionicum (strain DSM 13744 / JCM 10971 / SI).